The following is a 161-amino-acid chain: Cystatin cpi-2 (161 aa).

The signal sequence occupies residues 1 to 25; the sequence is MMSTMSIKEGLLVILLSLFLFDTTA. Positions 76–78 match the Important for interaction with host LGMN motif; that stretch reads SND. Asparagine 89 is a glycosylation site (N-linked (GlcNAc...) asparagine). The Secondary area of contact signature appears at 93–97; that stretch reads QVVAG. Cysteine 111 and cysteine 124 are joined by a disulfide.

It belongs to the cystatin family.

In terms of biological role, cysteine protease inhibitor which inhibits members of the peptidase C1 family. Also acts as an asparaginyl endopeptidase inhibitor. In the human host, inhibits CTSL/cathepsin L, CTSS/cathepsin S, CTSB/cathepsin B and asparaginyl endopeptidase LGMN/AEP which may cause defects in both antigen and MHC class II invariant chain CD74/Ii processing. The polypeptide is Cystatin cpi-2 (Brugia malayi (Filarial nematode worm)).